The sequence spans 299 residues: Regucalcin (299 aa).

Glutamate 18 contacts a divalent metal cation. Substrate-binding residues include arginine 101, asparagine 103, and glutamate 121. Lysine 144 is subject to N6-succinyllysine. 2 residues coordinate a divalent metal cation: asparagine 154 and aspartate 204. Residue aspartate 204 is the Proton donor/acceptor of the active site. Lysine 244 and lysine 253 each carry N6-succinyllysine.

The protein belongs to the SMP-30/CGR1 family. Monomer. Zn(2+) is required as a cofactor. It depends on Mn(2+) as a cofactor. Requires Ca(2+) as cofactor. The cofactor is Mg(2+).

It localises to the cytoplasm. The catalysed reaction is D-glucono-1,5-lactone + H2O = D-gluconate + H(+). In terms of biological role, gluconolactonase with low activity towards other sugar lactones, including gulonolactone and galactonolactone. Can also hydrolyze diisopropyl phosphorofluoridate and phenylacetate (in vitro). Calcium-binding protein. Modulates Ca(2+) signaling, and Ca(2+)-dependent cellular processes and enzyme activities. The chain is Regucalcin (RGN) from Homo sapiens (Human).